A 462-amino-acid chain; its full sequence is Glutamate decarboxylase alpha (462 aa).

An N6-(pyridoxal phosphate)lysine modification is found at Lys273.

Belongs to the group II decarboxylase family. Pyridoxal 5'-phosphate is required as a cofactor.

The enzyme catalyses L-glutamate + H(+) = 4-aminobutanoate + CO2. Its function is as follows. Converts internalized glutamate to GABA and increases the internal pH. Involved in glutamate-dependent acid resistance in gastric fluid. The sequence is that of Glutamate decarboxylase alpha (gadA) from Listeria monocytogenes serovar 1/2a (strain ATCC BAA-679 / EGD-e).